The chain runs to 415 residues: Mulatexin (415 aa).

The signal sequence occupies residues 1–21 (MKFRTLLIIFSLVFLLEIVSA). Positions 23-66 (EPQCGRDAGGALCHGNLCCSHWGFCGTTAIYCDVDQGCQSQCWS) constitute a Chitin-binding type-1 1 domain. Intrachain disulfides connect Cys-26–Cys-41, Cys-35–Cys-47, Cys-40–Cys-54, and Cys-60–Cys-64. Residues 65–127 (WSSPPPPSPP…PGGPERPDHR (63 aa)) form a disordered region. Residues 67-121 (SPPPPSPPPPPPSPPPPSPPPPSPPPPSPPPPSPPPPSPPPPSPPPPSPPPPGGP) are compositionally biased toward pro residues. A Chitin-binding type-1 2 domain is found at 125 to 167 (DHRCGRALGNPPCNPGRCCSIHNWCGSTAAYCRGSSCQYQCWN). 4 cysteine pairs are disulfide-bonded: Cys-128/Cys-143, Cys-137/Cys-149, Cys-142/Cys-156, and Cys-161/Cys-165. N-linked (GlcNAc...) asparagine glycosylation occurs at Asn-264.

Glycosylated.

It localises to the secreted. In terms of biological role, chitin-binding protein which slows larval growth when consumed by the lepidopteran species S.ricini and M.brassica, but not when consumed by the mulberry specialist B.mori. Lacks chitinase activity. This is Mulatexin from Morus alba (White mulberry).